Reading from the N-terminus, the 185-residue chain is Large ribosomal subunit protein uL5 (185 aa).

It belongs to the universal ribosomal protein uL5 family. In terms of assembly, part of the 50S ribosomal subunit; part of the 5S rRNA/L5/L18/L25 subcomplex. Contacts the 5S rRNA and the P site tRNA. Forms a bridge to the 30S subunit in the 70S ribosome.

In terms of biological role, this is one of the proteins that bind and probably mediate the attachment of the 5S RNA into the large ribosomal subunit, where it forms part of the central protuberance. In the 70S ribosome it contacts protein S13 of the 30S subunit (bridge B1b), connecting the 2 subunits; this bridge is implicated in subunit movement. Contacts the P site tRNA; the 5S rRNA and some of its associated proteins might help stabilize positioning of ribosome-bound tRNAs. In Bartonella bacilliformis (strain ATCC 35685 / KC583 / Herrer 020/F12,63), this protein is Large ribosomal subunit protein uL5.